Consider the following 388-residue polypeptide: Succinate--CoA ligase [ADP-forming] subunit beta (388 aa).

An ATP-grasp domain is found at 9–244 (KSLFAEYGLP…PSQDDAREAH (236 aa)). ATP is bound by residues lysine 46, 53–55 (GRG), glutamate 99, threonine 102, and glutamate 107. Asparagine 199 and aspartate 213 together coordinate Mg(2+). Substrate is bound by residues asparagine 264 and 321-323 (GIV).

Belongs to the succinate/malate CoA ligase beta subunit family. In terms of assembly, heterotetramer of two alpha and two beta subunits. The cofactor is Mg(2+).

It carries out the reaction succinate + ATP + CoA = succinyl-CoA + ADP + phosphate. It catalyses the reaction GTP + succinate + CoA = succinyl-CoA + GDP + phosphate. It participates in carbohydrate metabolism; tricarboxylic acid cycle; succinate from succinyl-CoA (ligase route): step 1/1. In terms of biological role, succinyl-CoA synthetase functions in the citric acid cycle (TCA), coupling the hydrolysis of succinyl-CoA to the synthesis of either ATP or GTP and thus represents the only step of substrate-level phosphorylation in the TCA. The beta subunit provides nucleotide specificity of the enzyme and binds the substrate succinate, while the binding sites for coenzyme A and phosphate are found in the alpha subunit. The sequence is that of Succinate--CoA ligase [ADP-forming] subunit beta from Shewanella sp. (strain ANA-3).